Here is a 122-residue protein sequence, read N- to C-terminus: Semaphorin-like protein A43 (122 aa).

Positions 1–122 (MIYLYTADNV…RIMYLFYEYH (122 aa)) constitute a Sema domain.

Belongs to the semaphorin family.

In Homo sapiens (Human), this protein is Semaphorin-like protein A43 (A43R).